A 393-amino-acid polypeptide reads, in one-letter code: Lysophosphatidic acid receptor 1 (393 aa).

The Extracellular segment spans residues 1–50 (MAAASTSSPVVSQPQFTAMNEPQCFYNESIAFFYNRSGKYLATEWNTVSK). 2 disulfides stabilise this stretch: Cys-24–Cys-190 and Cys-188–Cys-195. N-linked (GlcNAc...) asparagine glycans are attached at residues Asn-27 and Asn-35. Lys-39 contributes to the a 1-acyl-sn-glycero-3-phosphate binding site. The chain crosses the membrane as a helical span at residues 51 to 75 (LVMGLGITVCIFIMLANLLVMVAIY). Residues 76-83 (VNRRFHFP) are Cytoplasmic-facing. The helical transmembrane segment at 84–107 (IYYLMANLAAADFFAGLAYFYLMF) threads the bilayer. Topologically, residues 108–121 (NTGPNTRRLTVSTW) are extracellular. The chain crosses the membrane as a helical span at residues 122–144 (LLRQGLIDTTVTASVANLLAIAI). Residue 124-129 (RQGLID) coordinates a 1-acyl-sn-glycero-3-phosphate. The Cytoplasmic portion of the chain corresponds to 145 to 163 (ERHITVFRMQLHTRMSNRR). Residues 164–184 (VVVVIVVIWTMAIVMGAIPSV) traverse the membrane as a helical segment. At 185-204 (GWNCICDIENCSNMAPLYSD) the chain is on the extracellular side. Residues 205–225 (SYLVFWAIFNLVTFVVMVVLY) traverse the membrane as a helical segment. Trp-210 provides a ligand contact to a 1-acyl-sn-glycero-3-phosphate. Over 226 to 255 (AHIFGYVRQRTMRMSRHSSGPRRNRDTMMS) the chain is Cytoplasmic. The chain crosses the membrane as a helical span at residues 256 to 280 (LLKTVVIVLGAFIICWTPGLVLLLL). The Extracellular segment spans residues 281-294 (DVCCPQCDVLAYEK). Cys-284 and Cys-287 form a disulfide bridge. The helical transmembrane segment at 295 to 315 (FFLLLAEFNSAMNPIIYSYRD) threads the bilayer. Residues 316–393 (KEMSATFRQI…PPERPGQGRV (78 aa)) are Cytoplasmic-facing. Position 341 is a phosphoserine (Ser-341). A Phosphothreonine modification is found at Thr-351. The segment covering 369 to 381 (KMRGGHHLLRDEQ) has biased composition (basic and acidic residues). Residues 369–393 (KMRGGHHLLRDEQPPPPERPGQGRV) form a disordered region.

This sequence belongs to the G-protein coupled receptor 1 family. Interacts with RALA and GRK2. Interacts with GNAQ and GNA13. Interacts with CD14; the interaction is enhanced by exposure to bacterial lipopolysaccharide (LPS). In terms of processing, N-glycosylated. As to expression, detected in brain cortex and in pituitary pars tuberalis.

Its subcellular location is the cell surface. It is found in the cell membrane. The protein localises to the endosome. Receptor for lysophosphatidic acid (LPA). Plays a role in the reorganization of the actin cytoskeleton, cell migration, differentiation and proliferation, and thereby contributes to the responses to tissue damage and infectious agents. Activates downstream signaling cascades via the G(i)/G(o), G(12)/G(13), and G(q) families of heteromeric G proteins. Signaling inhibits adenylyl cyclase activity and decreases cellular cAMP levels. Signaling triggers an increase of cytoplasmic Ca(2+) levels. Activates RALA; this leads to the activation of phospholipase C (PLC) and the formation of inositol 1,4,5-trisphosphate. Signaling mediates activation of down-stream MAP kinases. Contributes to the regulation of cell shape. Promotes Rho-dependent reorganization of the actin cytoskeleton in neuronal cells and neurite retraction. Promotes the activation of Rho and the formation of actin stress fibers. Promotes formation of lamellipodia at the leading edge of migrating cells via activation of RAC1. Through its function as LPA receptor, plays a role in chemotaxis and cell migration, including responses to injury and wounding. Plays a role in triggering inflammation in response to bacterial lipopolysaccharide (LPS) via its interaction with CD14. Promotes cell proliferation in response to LPA. Inhibits the intracellular ciliogenesis pathway in response to LPA and through AKT1 activation. Required for normal skeleton development. May play a role in osteoblast differentiation. Required for normal brain development. Required for normal proliferation, survival and maturation of newly formed neurons in the adult dentate gyrus. Plays a role in pain perception and in the initiation of neuropathic pain. The sequence is that of Lysophosphatidic acid receptor 1 (LPAR1) from Ovis aries (Sheep).